We begin with the raw amino-acid sequence, 204 residues long: Probable carboxysome shell protein CsoS1E (204 aa).

3 stretches are compositionally biased toward low complexity: residues Met-1 to Ser-14, Ser-41 to Ser-84, and Gly-92 to Ser-102. The disordered stretch occupies residues Met-1–Ser-102. The BMC domain occupies Ala-111–Arg-196.

This sequence belongs to the bacterial microcompartments protein family. In terms of assembly, homohexamer.

The protein localises to the carboxysome. Its function is as follows. A probable carboxysomal shell protein found only in Prochlorococcus and Synechococcus strains that grow in low light. The chain is Probable carboxysome shell protein CsoS1E from Prochlorococcus marinus (strain MIT 9313).